A 385-amino-acid chain; its full sequence is Chaperone protein DnaJ (385 aa).

In terms of domain architecture, J spans 5-70 (DYYEVLGVSK…DKKAAYDRFG (66 aa)). The CR-type zinc finger occupies 143–221 (GLSKQITVPS…CGGAGRQEKD (79 aa)). C156, C159, C173, C176, C195, C198, C209, and C212 together coordinate Zn(2+). CXXCXGXG motif repeat units lie at residues 156–163 (CSSCDGTG), 173–180 (CPTCSGMG), 195–202 (CPTCNGMG), and 209–216 (CRTCGGAG). A disordered region spans residues 299-323 (GGRSRVRVPEGSQSGRQMRLRGKGM).

It belongs to the DnaJ family. As to quaternary structure, homodimer. Requires Zn(2+) as cofactor.

The protein localises to the cytoplasm. In terms of biological role, participates actively in the response to hyperosmotic and heat shock by preventing the aggregation of stress-denatured proteins and by disaggregating proteins, also in an autonomous, DnaK-independent fashion. Unfolded proteins bind initially to DnaJ; upon interaction with the DnaJ-bound protein, DnaK hydrolyzes its bound ATP, resulting in the formation of a stable complex. GrpE releases ADP from DnaK; ATP binding to DnaK triggers the release of the substrate protein, thus completing the reaction cycle. Several rounds of ATP-dependent interactions between DnaJ, DnaK and GrpE are required for fully efficient folding. Also involved, together with DnaK and GrpE, in the DNA replication of plasmids through activation of initiation proteins. In Jannaschia sp. (strain CCS1), this protein is Chaperone protein DnaJ.